The chain runs to 317 residues: tRNA pseudouridine synthase B (317 aa).

Catalysis depends on Asp-47, which acts as the Nucleophile.

The protein belongs to the pseudouridine synthase TruB family. Type 1 subfamily.

The enzyme catalyses uridine(55) in tRNA = pseudouridine(55) in tRNA. In terms of biological role, responsible for synthesis of pseudouridine from uracil-55 in the psi GC loop of transfer RNAs. This chain is tRNA pseudouridine synthase B, found in Vibrio atlanticus (strain LGP32) (Vibrio splendidus (strain Mel32)).